The chain runs to 1763 residues: Collagen alpha-2(IV) chain (1763 aa).

The signal sequence occupies residues 1-26 (MSSRLRIPLWLLLPTTALVYFVTTVS). A 7S domain region spans residues 27 to 42 (TQITCRDCTNRGCFCV). Residues 43–1529 (GEKGSMGIPG…SGPPGPPGPS (1487 aa)) form a triple-helical region region. Disordered stretches follow at residues 51–529 (PGPQ…PGPK) and 550–1529 (AGYA…PGPS). The segment covering 72–81 (PGPKGQKGSQ) has biased composition (low complexity). Asn126 carries an N-linked (GlcNAc...) asparagine glycan. Residues 135–152 (PGLPGPPGMPGFPGPPGV) are compositionally biased toward pro residues. The span at 190 to 199 (FPGEKGDRGD) shows a compositional bias: basic and acidic residues. Positions 206-217 (RGPPGEAGPPGN) are enriched in pro residues. Low complexity predominate over residues 225–235 (PKGDPGEQGPR). Ala249 is a glycosylation site (O-linked (Xyl...) (glycosaminoglycan) serine). Residues 326–335 (DGLPGVPGLP) show a composition bias toward low complexity. The segment covering 400–409 (GLPGGPGLPG) has biased composition (gly residues). 2 stretches are compositionally biased toward low complexity: residues 410–419 (LPGLEGLPGP) and 428–453 (IPGA…PGPR). The span at 466 to 481 (KDGRPGLDGLPGRKGE) shows a compositional bias: basic and acidic residues. The segment covering 564–582 (LPGIPGATGAPGDDGLPGA) has biased composition (low complexity). The segment covering 583–592 (PGRPGPPGPP) has biased composition (pro residues). 2 stretches are compositionally biased toward low complexity: residues 699-714 (DAGL…AVGP) and 731-783 (KDGL…PGIP). Pro residues predominate over residues 810–832 (PGLPGPKGEPGPSTTGPPGPPGF). Low complexity-rich tracts occupy residues 865–895 (EIGL…KEGP), 946–977 (FPGQ…PGQK), 1040–1051 (PGLPGQPGLRGP), 1077–1086 (LMGEKGLPGL), 1108–1146 (PGLK…QPGL), 1210–1231 (PGFP…PGPR), 1280–1296 (LPGL…PGLK), 1367–1386 (PAGL…PGFP), 1462–1480 (LPGL…FAGA), and 1499–1510 (PGLPGFPGIEGI). Over residues 1511–1528 (PGPPGLPGPSGPPGPPGP) the composition is skewed to pro residues. The Collagen IV NC1 domain maps to 1533-1756 (GFLLVKHSQT…SRCQVCIRSP (224 aa)). 6 disulfide bridges follow: Cys1548–Cys1637, Cys1581–Cys1634, Cys1593–Cys1599, Cys1656–Cys1752, Cys1690–Cys1749, and Cys1702–Cys1709.

The protein belongs to the type IV collagen family. In terms of assembly, trimers of two alpha 1(IV) and one alpha 2(IV) chain. Type IV collagen forms a mesh-like network linked through intermolecular interactions between 7S domains and between NC1 domains. Post-translationally, prolines at the third position of the tripeptide repeating unit (G-X-Y) are hydroxylated in some or all of the chains. In terms of processing, type IV collagens contain numerous cysteine residues which are involved in inter- and intramolecular disulfide bonding. 12 of these, located in the NC1 domain, are conserved in all known type IV collagens. The trimeric structure of the NC1 domains is stabilized by covalent bonds between Lys and Met residues.

The protein resides in the secreted. It localises to the extracellular space. The protein localises to the extracellular matrix. It is found in the basement membrane. Collagen type IV is specific for basement membranes. The polypeptide is Collagen alpha-2(IV) chain (Ascaris suum (Pig roundworm)).